The sequence spans 96 residues: Prokineticin Bo8 (96 aa).

The first 19 residues, 1 to 19 (MKCFAQIVVLLLVIAFSHG), serve as a signal peptide directing secretion. Intrachain disulfides connect cysteine 26/cysteine 38, cysteine 32/cysteine 50, cysteine 37/cysteine 78, cysteine 60/cysteine 86, and cysteine 80/cysteine 95.

As to expression, expressed by the skin glands.

The protein resides in the secreted. Functionally, potent agonist for both PKR1/PROKR1 and PKR2/PROKR2, and inducer of a potent and long-lasting hyperalgesia. Also potentiates capsaicin-induced TRPV1 current, when tested on DRG neurons. At subnanomolar concentrations, this protein both induces potent chemotaxis of macrophages and stimulates LPS-induced production of the pro-inflammatory cytokines IL-1 and IL-12. In vivo, potently stimulates the contraction of the guinea-pig gastrointestinal (GI) smooth muscle (nanomolar concentration). In Bombina orientalis (Oriental fire-bellied toad), this protein is Prokineticin Bo8.